The following is a 480-amino-acid chain: Acetyl-coenzyme A carboxylase carboxyl transferase subunit beta, chloroplastic (480 aa).

One can recognise a CoA carboxyltransferase N-terminal domain in the interval 212–480; that stretch reads LWVQCENCYG…FPLNQINKYK (269 aa). Residues Cys-216, Cys-219, Cys-235, and Cys-238 each coordinate Zn(2+). The segment at 216 to 238 adopts a C4-type zinc-finger fold; that stretch reads CENCYGLNYQKFFRSKMNICERC.

The protein belongs to the AccD/PCCB family. Acetyl-CoA carboxylase is a heterohexamer composed of biotin carboxyl carrier protein, biotin carboxylase and 2 subunits each of ACCase subunit alpha and ACCase plastid-coded subunit beta (accD). It depends on Zn(2+) as a cofactor.

It is found in the plastid. The protein localises to the chloroplast stroma. It catalyses the reaction N(6)-carboxybiotinyl-L-lysyl-[protein] + acetyl-CoA = N(6)-biotinyl-L-lysyl-[protein] + malonyl-CoA. The protein operates within lipid metabolism; malonyl-CoA biosynthesis; malonyl-CoA from acetyl-CoA: step 1/1. Component of the acetyl coenzyme A carboxylase (ACC) complex. Biotin carboxylase (BC) catalyzes the carboxylation of biotin on its carrier protein (BCCP) and then the CO(2) group is transferred by the transcarboxylase to acetyl-CoA to form malonyl-CoA. In Illicium oligandrum (Star anise), this protein is Acetyl-coenzyme A carboxylase carboxyl transferase subunit beta, chloroplastic.